Reading from the N-terminus, the 955-residue chain is UPF0182 protein syc2310_c (955 aa).

A run of 9 helical transmembrane segments spans residues 12–32 (IAAI…TLWF), 45–65 (LAVQ…LIGG), 85–105 (LQLG…LALT), 141–161 (GSWP…LFLW), 163–183 (PWPL…LLTS), 224–244 (FDLW…YYLA), 263–283 (HLVR…WLAQ), 306–326 (LPLL…LFWQ), and 343–363 (AAIA…QLVV).

It belongs to the UPF0182 family.

Its subcellular location is the cell membrane. This chain is UPF0182 protein syc2310_c, found in Synechococcus sp. (strain ATCC 27144 / PCC 6301 / SAUG 1402/1) (Anacystis nidulans).